The primary structure comprises 346 residues: GTPase Obg (346 aa).

An Obg domain is found at 1-158; that stretch reads MFVDECVVKL…GTYRLVLKSI (158 aa). Residues 159 to 332 form the OBG-type G domain; the sequence is ADVGLVGFPN…LKKELLKRVT (174 aa). GTP is bound by residues 165–172, 190–194, 216–219, 286–289, and 313–315; these read GFPNAGKS, FTTLH, DVPG, NKMD, and SCL. 2 residues coordinate Mg(2+): Ser-172 and Thr-192.

This sequence belongs to the TRAFAC class OBG-HflX-like GTPase superfamily. OBG GTPase family. In terms of assembly, monomer. The cofactor is Mg(2+).

It is found in the cytoplasm. In terms of biological role, an essential GTPase which binds GTP, GDP and possibly (p)ppGpp with moderate affinity, with high nucleotide exchange rates and a fairly low GTP hydrolysis rate. Plays a role in control of the cell cycle, stress response, ribosome biogenesis and in those bacteria that undergo differentiation, in morphogenesis control. The chain is GTPase Obg from Opitutus terrae (strain DSM 11246 / JCM 15787 / PB90-1).